The primary structure comprises 366 residues: Chorismate synthase (366 aa).

Arg-46 serves as a coordination point for NADP(+). Residues 122-124, 243-244, Gly-284, 299-303, and Arg-325 each bind FMN; these read RSS, NG, and KPTPS.

This sequence belongs to the chorismate synthase family. Homotetramer. Requires FMNH2 as cofactor.

It carries out the reaction 5-O-(1-carboxyvinyl)-3-phosphoshikimate = chorismate + phosphate. It participates in metabolic intermediate biosynthesis; chorismate biosynthesis; chorismate from D-erythrose 4-phosphate and phosphoenolpyruvate: step 7/7. Its function is as follows. Catalyzes the anti-1,4-elimination of the C-3 phosphate and the C-6 proR hydrogen from 5-enolpyruvylshikimate-3-phosphate (EPSP) to yield chorismate, which is the branch point compound that serves as the starting substrate for the three terminal pathways of aromatic amino acid biosynthesis. This reaction introduces a second double bond into the aromatic ring system. The sequence is that of Chorismate synthase from Campylobacter hominis (strain ATCC BAA-381 / DSM 21671 / CCUG 45161 / LMG 19568 / NCTC 13146 / CH001A).